Reading from the N-terminus, the 310-residue chain is HPr kinase/phosphorylase (310 aa).

Residues histidine 138 and lysine 159 contribute to the active site. 153 to 160 contributes to the ATP binding site; the sequence is GKSGVGKS. Residue serine 160 participates in Mg(2+) binding. The active-site Proton acceptor; for phosphorylation activity. Proton donor; for dephosphorylation activity is the aspartate 177. An important for the catalytic mechanism of both phosphorylation and dephosphorylation region spans residues 201–210; it reads LEIRGLGIIN. Glutamate 202 contacts Mg(2+). Arginine 243 is an active-site residue. Positions 264–269 are important for the catalytic mechanism of dephosphorylation; the sequence is PVRPGR.

Belongs to the HPrK/P family. Homohexamer. Mg(2+) is required as a cofactor.

It carries out the reaction [HPr protein]-L-serine + ATP = [HPr protein]-O-phospho-L-serine + ADP + H(+). The enzyme catalyses [HPr protein]-O-phospho-L-serine + phosphate + H(+) = [HPr protein]-L-serine + diphosphate. Functionally, catalyzes the ATP- as well as the pyrophosphate-dependent phosphorylation of a specific serine residue in HPr, a phosphocarrier protein of the phosphoenolpyruvate-dependent sugar phosphotransferase system (PTS). HprK/P also catalyzes the pyrophosphate-producing, inorganic phosphate-dependent dephosphorylation (phosphorolysis) of seryl-phosphorylated HPr (P-Ser-HPr). The two antagonistic activities of HprK/P are regulated by several intracellular metabolites, which change their concentration in response to the absence or presence of rapidly metabolisable carbon sources (glucose, fructose, etc.) in the growth medium. Also phosphorylates/dephosphorylates the HPr-like catabolite repression protein crh on a specific serine residue. Therefore, by controlling the phosphorylation state of HPr and crh, HPrK/P is a sensor enzyme that plays a major role in the regulation of carbon metabolism and sugar transport: it mediates carbon catabolite repression (CCR), and regulates PTS-catalyzed carbohydrate uptake and inducer exclusion. The chain is HPr kinase/phosphorylase from Bacillus pumilus (strain SAFR-032).